A 151-amino-acid polypeptide reads, in one-letter code: Ribosome-binding factor A (151 aa).

The interval 120–151 (RSPKVVRDLDDTSSDDTSPDANTDTDKETDAE) is disordered.

It belongs to the RbfA family. As to quaternary structure, monomer. Binds 30S ribosomal subunits, but not 50S ribosomal subunits or 70S ribosomes.

The protein localises to the cytoplasm. Functionally, one of several proteins that assist in the late maturation steps of the functional core of the 30S ribosomal subunit. Associates with free 30S ribosomal subunits (but not with 30S subunits that are part of 70S ribosomes or polysomes). Required for efficient processing of 16S rRNA. May interact with the 5'-terminal helix region of 16S rRNA. This Xanthobacter autotrophicus (strain ATCC BAA-1158 / Py2) protein is Ribosome-binding factor A.